Consider the following 529-residue polypeptide: Peptide chain release factor 3 (529 aa).

Residues S11–M280 enclose the tr-type G domain. Residues S20–T27, D88–H92, and N142–D145 each bind GTP.

The protein belongs to the TRAFAC class translation factor GTPase superfamily. Classic translation factor GTPase family. PrfC subfamily.

It is found in the cytoplasm. Increases the formation of ribosomal termination complexes and stimulates activities of RF-1 and RF-2. It binds guanine nucleotides and has strong preference for UGA stop codons. It may interact directly with the ribosome. The stimulation of RF-1 and RF-2 is significantly reduced by GTP and GDP, but not by GMP. The sequence is that of Peptide chain release factor 3 from Pectobacterium carotovorum subsp. carotovorum (strain PC1).